The primary structure comprises 338 residues: Protein REG2 (338 aa).

A disordered region spans residues 1-21 (MTLSNCDSLDNLFQDPPEEEE).

Regulatory subunit, binds to type-1 protein phosphatase. Functions with HEX2/REG1 and SNF1 protein kinase to regulate growth. Might regulate SNF1 directly or indirectly. This Saccharomyces cerevisiae (strain ATCC 204508 / S288c) (Baker's yeast) protein is Protein REG2 (REG2).